A 277-amino-acid polypeptide reads, in one-letter code: Release factor glutamine methyltransferase (277 aa).

S-adenosyl-L-methionine contacts are provided by residues 117–121, Asp140, Trp168, and Asn183; that span reads GTGTG. Position 183-186 (183-186) interacts with substrate; it reads NPPY.

It belongs to the protein N5-glutamine methyltransferase family. PrmC subfamily.

The catalysed reaction is L-glutaminyl-[peptide chain release factor] + S-adenosyl-L-methionine = N(5)-methyl-L-glutaminyl-[peptide chain release factor] + S-adenosyl-L-homocysteine + H(+). Methylates the class 1 translation termination release factors RF1/PrfA and RF2/PrfB on the glutamine residue of the universally conserved GGQ motif. The polypeptide is Release factor glutamine methyltransferase (Salmonella typhimurium (strain LT2 / SGSC1412 / ATCC 700720)).